A 209-amino-acid polypeptide reads, in one-letter code: GTP cyclohydrolase 1 (209 aa).

Zn(2+) contacts are provided by C100, H103, and C171.

This sequence belongs to the GTP cyclohydrolase I family. In terms of assembly, toroid-shaped homodecamer, composed of two pentamers of five dimers.

The catalysed reaction is GTP + H2O = 7,8-dihydroneopterin 3'-triphosphate + formate + H(+). It participates in cofactor biosynthesis; 7,8-dihydroneopterin triphosphate biosynthesis; 7,8-dihydroneopterin triphosphate from GTP: step 1/1. The sequence is that of GTP cyclohydrolase 1 from Ralstonia nicotianae (strain ATCC BAA-1114 / GMI1000) (Ralstonia solanacearum).